Reading from the N-terminus, the 485-residue chain is N-succinylglutamate 5-semialdehyde dehydrogenase (485 aa).

220 to 225 contributes to the NAD(+) binding site; that stretch reads GSANTG. Residues E243 and C278 contribute to the active site.

This sequence belongs to the aldehyde dehydrogenase family. AstD subfamily.

The enzyme catalyses N-succinyl-L-glutamate 5-semialdehyde + NAD(+) + H2O = N-succinyl-L-glutamate + NADH + 2 H(+). The protein operates within amino-acid degradation; L-arginine degradation via AST pathway; L-glutamate and succinate from L-arginine: step 4/5. Functionally, catalyzes the NAD-dependent reduction of succinylglutamate semialdehyde into succinylglutamate. This is N-succinylglutamate 5-semialdehyde dehydrogenase from Vibrio cholerae serotype O1 (strain M66-2).